The following is a 75-amino-acid chain: Dermaseptin-DA2 (75 aa).

The N-terminal stretch at Met1–Cys22 is a signal peptide. The propeptide occupies Glu23 to Glu42.

Belongs to the frog skin active peptide (FSAP) family. Dermaseptin subfamily. As to expression, expressed by the skin glands.

Its subcellular location is the secreted. Functionally, possesses a potent antimicrobial activity against Gram-positive and Gram-negative bacteria. Probably acts by disturbing membrane functions with its amphipathic structure. The chain is Dermaseptin-DA2 from Agalychnis dacnicolor (Giant Mexican leaf frog).